We begin with the raw amino-acid sequence, 92 residues long: Phospholemman (92 aa).

An N-terminal signal peptide occupies residues 1-20; it reads MASPGHILIVCVCLLSMASA. At 21–35 the chain is on the extracellular side; sequence EAPQEPDPFTYDYHT. A helical membrane pass occupies residues 36–56; it reads LRIGGLTIAGILFILGILIIL. Topologically, residues 57 to 92 are cytoplasmic; that stretch reads SKRCRCKFNQQQRTGEPDEEEGTFRSSIRRLSTRRR. The S-palmitoyl cysteine moiety is linked to residue C60. C62 bears the S-glutathionyl cysteine; alternate mark. Residue C62 is the site of S-palmitoyl cysteine; alternate attachment. The segment at 66–92 is disordered; it reads QQQRTGEPDEEEGTFRSSIRRLSTRRR. A Phosphothreonine modification is found at T79. S82 is modified (phosphoserine). At S83 the chain carries Phosphoserine; by PKA and PKC. The span at 83–92 shows a compositional bias: basic residues; sequence SIRRLSTRRR. At S88 the chain carries Phosphoserine; by PKA. T89 carries the post-translational modification Phosphothreonine; by PKC.

Belongs to the FXYD family. Homotetramer. Monomer. Regulatory subunit of the sodium/potassium-transporting ATPase (NKA) which is composed of a catalytic alpha subunit, a non-catalytic beta subunit and an additional regulatory subunit. The monomeric form associates with NKA while the oligomeric form does not. Interacts with the catalytic alpha-1 subunit ATP1A1. Also interacts with the catalytic alpha-2 and alpha-3 subunits ATP1A2 and ATP1A3. Very little interaction with ATP1A1, ATP1A2 or ATP1A3 when phosphorylated at Ser-83. Interacts with the non-catalytic beta-1 subunit ATP1B1. Oxidative stress decreases interaction with ATP1A1 but increases interaction with ATP1B1. Post-translationally, major plasma membrane substrate for cAMP-dependent protein kinase (PKA) and protein kinase C (PKC) in several different tissues. Phosphorylated in response to insulin and adrenergic stimulation. Phosphorylation at Ser-88 stimulates sodium/potassium-transporting ATPase activity while the unphosphorylated form inhibits sodium/potassium-transporting ATPase activity. Phosphorylation increases tetramerization, decreases binding to ATP1A1 and reduces inhibition of ATP1A1 activity. Phosphorylation at Ser-83 leads to greatly reduced interaction with ATP1A1, ATP1A2 and ATP1A3. May be phosphorylated by DMPK. Palmitoylation increases half-life and stability and is enhanced upon phosphorylation at Ser-88 by PKA. As to expression, in adult brain, highest levels are found in the cerebellum and in the lateral, third and fourth ventricles of the choroid plexus (at protein level). Also detected in cells of a portion of the ependymal lining of the lateral ventricle on its rostral surface posterior to the caudate putamen (at protein level). Expressed in a subset of neurons which secrete gonadotropin-releasing hormone.

Its subcellular location is the cell membrane. It is found in the sarcolemma. It localises to the apical cell membrane. The protein resides in the membrane. The protein localises to the caveola. Its subcellular location is the T-tubule. Functionally, associates with and regulates the activity of the sodium/potassium-transporting ATPase (NKA) which transports Na(+) out of the cell and K(+) into the cell. Inhibits NKA activity in its unphosphorylated state and stimulates activity when phosphorylated. Reduces glutathionylation of the NKA beta-1 subunit ATP1B1, thus reversing glutathionylation-mediated inhibition of ATP1B1. Contributes to female sexual development by maintaining the excitability of neurons which secrete gonadotropin-releasing hormone. The chain is Phospholemman from Rattus norvegicus (Rat).